A 149-amino-acid polypeptide reads, in one-letter code: MIMSLRLNDLKPALGASSCRARVGRGIGSGLGKTAGRGHKGSFARKGGGKIKPGFEGGQTPMQRRLPKIGFRSRSVANTAEVLSYKLDNLEPGEIDFASLRLAKLVPSTAKKAKIVKKGRLTKVFVLKGIESTAGARAMIETTGGSFQE.

Residues 30 to 63 are disordered; that stretch reads GLGKTAGRGHKGSFARKGGGKIKPGFEGGQTPMQ. Positions 36–49 are enriched in basic residues; it reads GRGHKGSFARKGGG.

Belongs to the universal ribosomal protein uL15 family. In terms of assembly, part of the 50S ribosomal subunit.

Its function is as follows. Binds to the 23S rRNA. The chain is Large ribosomal subunit protein uL15 from Xylella fastidiosa (strain 9a5c).